A 35-amino-acid chain; its full sequence is Photosystem II reaction center protein T (35 aa).

The helical transmembrane segment at 3–23 threads the bilayer; the sequence is ALVYTFLLVSTLGILFFAIFF.

The protein belongs to the PsbT family. In terms of assembly, PSII is composed of 1 copy each of membrane proteins PsbA, PsbB, PsbC, PsbD, PsbE, PsbF, PsbH, PsbI, PsbJ, PsbK, PsbL, PsbM, PsbT, PsbY, PsbZ, Psb30/Ycf12, at least 3 peripheral proteins of the oxygen-evolving complex and a large number of cofactors. It forms dimeric complexes.

It is found in the plastid. The protein resides in the chloroplast thylakoid membrane. Found at the monomer-monomer interface of the photosystem II (PS II) dimer, plays a role in assembly and dimerization of PSII. PSII is a light-driven water plastoquinone oxidoreductase, using light energy to abstract electrons from H(2)O, generating a proton gradient subsequently used for ATP formation. This chain is Photosystem II reaction center protein T, found in Gnetum gnemon (Spanish joint-fir).